A 63-amino-acid polypeptide reads, in one-letter code: Beta-defensin 4 (63 aa).

A signal peptide spans 1–22 (MRIHYLLFTFLLVLLSPLAAFT). Glutamine 23 is modified (pyrrolidone carboxylic acid). 3 disulfides stabilise this stretch: cysteine 31-cysteine 59, cysteine 38-cysteine 52, and cysteine 42-cysteine 60.

The protein belongs to the beta-defensin family. In terms of tissue distribution, tongue, esophagus and trachea.

It localises to the secreted. Functionally, exhibits antimicrobial activity against Gram-negative bacteria and Gram-positive bacteria. May act as a ligand for C-C chemokine receptor CCR6. Can bind to mouse (but not human) CCR6 and induce chemotactic activity of CCR6-expressing cells. This chain is Beta-defensin 4 (Defb4), found in Mus musculus (Mouse).